Here is a 154-residue protein sequence, read N- to C-terminus: Insulin-like growth factor 1 (154 aa).

The b stretch occupies residues 50-78 (GPETLCGAELVDALQFVCGDRGFYFNKPT). Disulfide bonds link Cys-55–Cys-97, Cys-67–Cys-110, and Cys-96–Cys-101. Residues 79-90 (GYGSSSRRAPQT) form a c region. Positions 91–111 (GIVDECCFRSCDLRRLEMYCA) are a. The interval 112 to 119 (PLKPAKSA) is d. A propeptide spans 120 to 154 (RSVRAQRHTDMPKAQKEVHLKNTSRGSAGNKNYRM) (e peptide). The segment at 121–154 (SVRAQRHTDMPKAQKEVHLKNTSRGSAGNKNYRM) is disordered. The span at 126-139 (RHTDMPKAQKEVHL) shows a compositional bias: basic and acidic residues. Residues 140 to 154 (KNTSRGSAGNKNYRM) show a composition bias toward polar residues.

It belongs to the insulin family. In terms of assembly, forms a ternary complex with IGFR1 and ITGAV:ITGB3. Forms a ternary complex with IGFR1 and ITGA6:ITGB4. Forms a ternary complex with IGFBP3 and ALS.

The protein localises to the secreted. Its function is as follows. The insulin-like growth factors, isolated from plasma, are structurally and functionally related to insulin but have a much higher growth-promoting activity. May be a physiological regulator of [1-14C]-2-deoxy-D-glucose (2DG) transport and glycogen synthesis in osteoblasts. Stimulates glucose transport in bone-derived osteoblastic (PyMS) cells and is effective at much lower concentrations than insulin, not only regarding glycogen and DNA synthesis but also with regard to enhancing glucose uptake. May play a role in synapse maturation. Ca(2+)-dependent exocytosis of IGF1 is required for sensory perception of smell in the olfactory bulb. Acts as a ligand for IGF1R. Binds to the alpha subunit of IGF1R, leading to the activation of the intrinsic tyrosine kinase activity which autophosphorylates tyrosine residues in the beta subunit thus initiating a cascade of down-stream signaling events leading to activation of the PI3K-AKT/PKB and the Ras-MAPK pathways. Binds to integrins ITGAV:ITGB3 and ITGA6:ITGB4. Its binding to integrins and subsequent ternary complex formation with integrins and IGFR1 are essential for IGF1 signaling. Induces the phosphorylation and activation of IGFR1, MAPK3/ERK1, MAPK1/ERK2 and AKT1. As part of the MAPK/ERK signaling pathway, acts as a negative regulator of apoptosis in cardiomyocytes via promotion of STUB1/CHIP-mediated ubiquitination and degradation of ICER-type isoforms of CREM. The chain is Insulin-like growth factor 1 from Bos taurus (Bovine).